The primary structure comprises 296 residues: 33 kDa chaperonin (296 aa).

Disulfide bonds link Cys-236-Cys-238 and Cys-269-Cys-272.

This sequence belongs to the HSP33 family. Under oxidizing conditions two disulfide bonds are formed involving the reactive cysteines. Under reducing conditions zinc is bound to the reactive cysteines and the protein is inactive.

The protein localises to the cytoplasm. Functionally, redox regulated molecular chaperone. Protects both thermally unfolding and oxidatively damaged proteins from irreversible aggregation. Plays an important role in the bacterial defense system toward oxidative stress. In Lactobacillus helveticus (strain DPC 4571), this protein is 33 kDa chaperonin.